The following is a 270-amino-acid chain: Thiamine thiazole synthase (270 aa).

NAD(+)-binding positions include A39, 58–59 (EQ), G66, and L130. C159 bears the 2,3-didehydroalanine (Cys) mark. Residue D161 coordinates NAD(+). Residues D161 and H176 each coordinate Fe cation. I223 contributes to the NAD(+) binding site. R233 is a binding site for glycine.

The protein belongs to the THI4 family. In terms of assembly, homooctamer; tetramer of dimers. Requires Fe(2+) as cofactor. In terms of processing, during the catalytic reaction, a sulfide is transferred from Cys-159 to a reaction intermediate, generating a dehydroalanine residue.

It catalyses the reaction [ADP-thiazole synthase]-L-cysteine + glycine + NAD(+) = [ADP-thiazole synthase]-dehydroalanine + ADP-5-ethyl-4-methylthiazole-2-carboxylate + nicotinamide + 3 H2O + 2 H(+). The protein operates within cofactor biosynthesis; thiamine diphosphate biosynthesis. Involved in biosynthesis of the thiamine precursor thiazole. Catalyzes the conversion of NAD and glycine to adenosine diphosphate 5-(2-hydroxyethyl)-4-methylthiazole-2-carboxylic acid (ADT), an adenylated thiazole intermediate. The reaction includes an iron-dependent sulfide transfer from a conserved cysteine residue of the protein to a thiazole intermediate. The enzyme can only undergo a single turnover, which suggests it is a suicide enzyme. This Aeropyrum pernix (strain ATCC 700893 / DSM 11879 / JCM 9820 / NBRC 100138 / K1) protein is Thiamine thiazole synthase.